Reading from the N-terminus, the 207-residue chain is Large ribosomal subunit protein uL4 (207 aa).

Residues 50-76 (AVKNRSAVSGGGRKPWKQKGTGRARQG) form a disordered region.

The protein belongs to the universal ribosomal protein uL4 family. Part of the 50S ribosomal subunit.

One of the primary rRNA binding proteins, this protein initially binds near the 5'-end of the 23S rRNA. It is important during the early stages of 50S assembly. It makes multiple contacts with different domains of the 23S rRNA in the assembled 50S subunit and ribosome. In terms of biological role, forms part of the polypeptide exit tunnel. The protein is Large ribosomal subunit protein uL4 of Staphylococcus aureus (strain JH9).